A 63-amino-acid chain; its full sequence is ORF6 protein (63 aa).

It belongs to the coronaviruses accessory protein 6 family.

The protein resides in the host endoplasmic reticulum membrane. It is found in the host Golgi apparatus membrane. Functionally, could be a determinant of virus virulence. Seems to stimulate cellular DNA synthesis in vitro. The polypeptide is ORF6 protein (Rhinolophus macrotis (Big-eared horseshoe bat)).